Here is a 442-residue protein sequence, read N- to C-terminus: Chromosomal replication initiator protein DnaA (442 aa).

Positions 1-75 (MDAWPRCLER…GNGEVALAVG (75 aa)) are domain I, interacts with DnaA modulators. The domain II stretch occupies residues 75–104 (GSRPRAPEPAPAPVAATIAPQAAPIAPFAG). Positions 105-322 (NLDSHYTFAN…GALNTLVARA (218 aa)) are domain III, AAA+ region. ATP contacts are provided by Gly-150, Gly-152, Lys-153, and Thr-154. Positions 323–442 (NFTGRSITVE…WEKLIRKLSE (120 aa)) are domain IV, binds dsDNA.

This sequence belongs to the DnaA family. In terms of assembly, oligomerizes as a right-handed, spiral filament on DNA at oriC.

The protein localises to the cytoplasm. Functionally, plays an essential role in the initiation and regulation of chromosomal replication. ATP-DnaA binds to the origin of replication (oriC) to initiate formation of the DNA replication initiation complex once per cell cycle. Binds the DnaA box (a 9 base pair repeat at the origin) and separates the double-stranded (ds)DNA. Forms a right-handed helical filament on oriC DNA; dsDNA binds to the exterior of the filament while single-stranded (ss)DNA is stabiized in the filament's interior. The ATP-DnaA-oriC complex binds and stabilizes one strand of the AT-rich DNA unwinding element (DUE), permitting loading of DNA polymerase. After initiation quickly degrades to an ADP-DnaA complex that is not apt for DNA replication. Binds acidic phospholipids. The protein is Chromosomal replication initiator protein DnaA of Xanthomonas oryzae pv. oryzae (strain PXO99A).